Reading from the N-terminus, the 368-residue chain is tRNA-specific 2-thiouridylase MnmA (368 aa).

Residues 14 to 21 (AMSGGVDS) and L40 each bind ATP. The active-site Nucleophile is the C108. Residues C108 and C204 are joined by a disulfide bond. G132 contacts ATP. An interaction with tRNA region spans residues 154-156 (KDQ). The active-site Cysteine persulfide intermediate is the C204.

Belongs to the MnmA/TRMU family.

The protein resides in the cytoplasm. It catalyses the reaction S-sulfanyl-L-cysteinyl-[protein] + uridine(34) in tRNA + AH2 + ATP = 2-thiouridine(34) in tRNA + L-cysteinyl-[protein] + A + AMP + diphosphate + H(+). Its function is as follows. Catalyzes the 2-thiolation of uridine at the wobble position (U34) of tRNA, leading to the formation of s(2)U34. The polypeptide is tRNA-specific 2-thiouridylase MnmA (Rickettsia canadensis (strain McKiel)).